We begin with the raw amino-acid sequence, 447 residues long: Cellulosome-anchoring protein (447 aa).

Residues Met-1–Ala-29 form the signal peptide. Residues Gln-30–Ala-180 enclose the Cohesin domain. The tract at residues Gln-30 to Ala-180 is receptor binding site for duplicated segment of CipA. The disordered stretch occupies residues Ala-177–Pro-247. A compositionally biased stretch (gly residues) spans Ala-188 to Gly-200. Low complexity predominate over residues Ser-201 to Thr-223. SLH domains follow at residues Pro-216–Asn-280, Ser-281–Thr-344, and Asp-345–Leu-408. The 21-residue stretch at Glu-409–Tyr-429 folds into the SLH 4; truncated domain.

It localises to the secreted. The protein resides in the cell wall. The protein localises to the S-layer. In terms of biological role, anchors the cellulosome to the cell surface by binding the duplicated segment that is present at the C-terminal end of CipA. This is Cellulosome-anchoring protein (ancA) from Acetivibrio thermocellus (strain ATCC 27405 / DSM 1237 / JCM 9322 / NBRC 103400 / NCIMB 10682 / NRRL B-4536 / VPI 7372) (Clostridium thermocellum).